A 441-amino-acid polypeptide reads, in one-letter code: NADH-quinone oxidoreductase subunit D (441 aa).

This sequence belongs to the complex I 49 kDa subunit family. NDH-1 is composed of 14 different subunits. Subunits NuoB, C, D, E, F, and G constitute the peripheral sector of the complex.

The protein localises to the cell membrane. It carries out the reaction a quinone + NADH + 5 H(+)(in) = a quinol + NAD(+) + 4 H(+)(out). Functionally, NDH-1 shuttles electrons from NADH, via FMN and iron-sulfur (Fe-S) centers, to quinones in the respiratory chain. The immediate electron acceptor for the enzyme in this species is believed to be a menaquinone. Couples the redox reaction to proton translocation (for every two electrons transferred, four hydrogen ions are translocated across the cytoplasmic membrane), and thus conserves the redox energy in a proton gradient. This chain is NADH-quinone oxidoreductase subunit D, found in Mycobacterium avium (strain 104).